A 198-amino-acid chain; its full sequence is ATP-dependent Clp protease proteolytic subunit 2 (198 aa).

Ser94 acts as the Nucleophile in catalysis. His119 is a catalytic residue.

This sequence belongs to the peptidase S14 family. Fourteen ClpP subunits assemble into 2 heptameric rings which stack back to back to give a disk-like structure with a central cavity, resembling the structure of eukaryotic proteasomes.

It is found in the cytoplasm. The catalysed reaction is Hydrolysis of proteins to small peptides in the presence of ATP and magnesium. alpha-casein is the usual test substrate. In the absence of ATP, only oligopeptides shorter than five residues are hydrolyzed (such as succinyl-Leu-Tyr-|-NHMec, and Leu-Tyr-Leu-|-Tyr-Trp, in which cleavage of the -Tyr-|-Leu- and -Tyr-|-Trp bonds also occurs).. Its function is as follows. Cleaves peptides in various proteins in a process that requires ATP hydrolysis. Has a chymotrypsin-like activity. Plays a major role in the degradation of misfolded proteins. The sequence is that of ATP-dependent Clp protease proteolytic subunit 2 from Borreliella burgdorferi (strain ATCC 35210 / DSM 4680 / CIP 102532 / B31) (Borrelia burgdorferi).